Consider the following 324-residue polypeptide: UDP-N-acetylenolpyruvoylglucosamine reductase (324 aa).

In terms of domain architecture, FAD-binding PCMH-type spans 38-231 (AGGSARRLYV…SRERIRSLLK (194 aa)). Residue R195 is part of the active site. The Proton donor role is filled by S246. E316 is a catalytic residue.

It belongs to the MurB family. Requires FAD as cofactor.

It is found in the cytoplasm. The enzyme catalyses UDP-N-acetyl-alpha-D-muramate + NADP(+) = UDP-N-acetyl-3-O-(1-carboxyvinyl)-alpha-D-glucosamine + NADPH + H(+). It participates in cell wall biogenesis; peptidoglycan biosynthesis. In terms of biological role, cell wall formation. In Thiobacillus denitrificans (strain ATCC 25259 / T1), this protein is UDP-N-acetylenolpyruvoylglucosamine reductase.